Here is a 314-residue protein sequence, read N- to C-terminus: D-alanine--D-alanine ligase (314 aa).

In terms of domain architecture, ATP-grasp spans 114–309 (KQLWRAHGLP…FDALVLRILD (196 aa)). Residue 140–195 (IEALGLPLIVKPVHEGSTIGISIVETRDALIAAHAEASRFDSAIMAERFVQGEEYT) coordinates ATP. Residues aspartate 263, glutamate 276, and asparagine 278 each coordinate Mg(2+).

This sequence belongs to the D-alanine--D-alanine ligase family. Mg(2+) is required as a cofactor. Requires Mn(2+) as cofactor.

The protein localises to the cytoplasm. It carries out the reaction 2 D-alanine + ATP = D-alanyl-D-alanine + ADP + phosphate + H(+). It functions in the pathway cell wall biogenesis; peptidoglycan biosynthesis. Cell wall formation. This chain is D-alanine--D-alanine ligase, found in Chromohalobacter salexigens (strain ATCC BAA-138 / DSM 3043 / CIP 106854 / NCIMB 13768 / 1H11).